The primary structure comprises 179 residues: ATP synthase subunit delta (179 aa).

The protein belongs to the ATPase delta chain family. As to quaternary structure, F-type ATPases have 2 components, F(1) - the catalytic core - and F(0) - the membrane proton channel. F(1) has five subunits: alpha(3), beta(3), gamma(1), delta(1), epsilon(1). F(0) has three main subunits: a(1), b(2) and c(10-14). The alpha and beta chains form an alternating ring which encloses part of the gamma chain. F(1) is attached to F(0) by a central stalk formed by the gamma and epsilon chains, while a peripheral stalk is formed by the delta and b chains.

The protein resides in the cell inner membrane. F(1)F(0) ATP synthase produces ATP from ADP in the presence of a proton or sodium gradient. F-type ATPases consist of two structural domains, F(1) containing the extramembraneous catalytic core and F(0) containing the membrane proton channel, linked together by a central stalk and a peripheral stalk. During catalysis, ATP synthesis in the catalytic domain of F(1) is coupled via a rotary mechanism of the central stalk subunits to proton translocation. In terms of biological role, this protein is part of the stalk that links CF(0) to CF(1). It either transmits conformational changes from CF(0) to CF(1) or is implicated in proton conduction. The polypeptide is ATP synthase subunit delta (Paraburkholderia xenovorans (strain LB400)).